A 231-amino-acid polypeptide reads, in one-letter code: Biosynthetic peptidoglycan transglycosylase (231 aa).

A helical transmembrane segment spans residues 7-27; sequence LLFWLILVPILLVLLMQLYFF.

It belongs to the glycosyltransferase 51 family.

Its subcellular location is the cell inner membrane. The enzyme catalyses [GlcNAc-(1-&gt;4)-Mur2Ac(oyl-L-Ala-gamma-D-Glu-L-Lys-D-Ala-D-Ala)](n)-di-trans,octa-cis-undecaprenyl diphosphate + beta-D-GlcNAc-(1-&gt;4)-Mur2Ac(oyl-L-Ala-gamma-D-Glu-L-Lys-D-Ala-D-Ala)-di-trans,octa-cis-undecaprenyl diphosphate = [GlcNAc-(1-&gt;4)-Mur2Ac(oyl-L-Ala-gamma-D-Glu-L-Lys-D-Ala-D-Ala)](n+1)-di-trans,octa-cis-undecaprenyl diphosphate + di-trans,octa-cis-undecaprenyl diphosphate + H(+). It functions in the pathway cell wall biogenesis; peptidoglycan biosynthesis. Functionally, peptidoglycan polymerase that catalyzes glycan chain elongation from lipid-linked precursors. This is Biosynthetic peptidoglycan transglycosylase from Herminiimonas arsenicoxydans.